Here is a 78-residue protein sequence, read N- to C-terminus: Large ribosomal subunit protein bL28 (78 aa).

It belongs to the bacterial ribosomal protein bL28 family.

The polypeptide is Large ribosomal subunit protein bL28 (Synechococcus sp. (strain CC9605)).